We begin with the raw amino-acid sequence, 261 residues long: Fructoselysine 6-kinase (261 aa).

It belongs to the carbohydrate kinase PfkB family. In terms of assembly, monomer.

The enzyme catalyses N(6)-(D-fructosyl)-L-lysine + ATP = N(6)-(6-phospho-D-fructosyl)-L-lysine + ADP + H(+). Its pathway is carbohydrate metabolism; fructoselysine degradation; D-glucose 6-phosphate and lysine from fructoselysine: step 1/2. In terms of biological role, catalyzes the ATP-dependent phosphorylation of fructoselysine to fructoselysine 6-phosphate. Functions in a fructoselysine degradation pathway that allows E.coli to grow on fructoselysine or psicoselysine. To a much lesser extenst, is also able to phosphorylate psicoselysine. The chain is Fructoselysine 6-kinase from Escherichia coli (strain K12).